The sequence spans 293 residues: Plant cysteine oxidase 1 (293 aa).

The Fe cation site is built by His148, His150, and His211. The disordered stretch occupies residues 250-293 (SEDDDVLSSEEEKEGYAWLQERDDNPEDHTNVVGALYRGPKVED). The segment covering 251-262 (EDDDVLSSEEEK) has biased composition (acidic residues). Residues 269 to 279 (QERDDNPEDHT) are compositionally biased toward basic and acidic residues.

The protein belongs to the cysteine dioxygenase family. Fe(2+) is required as a cofactor.

Its subcellular location is the nucleus. The protein localises to the cytoplasm. The catalysed reaction is L-cysteine + O2 = 3-sulfino-L-alanine + H(+). Catalyzes the oxidation of N-terminal cysteine residues (N-Cys), thus preparing the protein for N-end rule pathway-mediated proteasomal degradation, upstream of the N-end rule enzymes ATE1, ATE2 and PRT6. Controls the preparation of the group VII ethylene response factor (ERF-VII) proteins for degradation via the 26S proteasome N-end rule pathway. Acts as an oxygen sensor that controls the stability of ERF-VII proteins, which are stabilized in flooding-induced hypoxia, and regulate transcriptional adaptation to these adverse conditions. Not active on Cys located inside or at the C-terminus of a peptide. Acts redundantly with PCO2 to repress the anaerobic response. The polypeptide is Plant cysteine oxidase 1 (Arabidopsis thaliana (Mouse-ear cress)).